Here is a 58-residue protein sequence, read N- to C-terminus: uncharacterized protein (58 aa).

The chain crosses the membrane as a helical span at residues 5–27 (FLHANITIIPHSVLYVSLSYYII).

Its subcellular location is the membrane. This is an uncharacterized protein from Saccharomyces cerevisiae (strain ATCC 204508 / S288c) (Baker's yeast).